Here is a 352-residue protein sequence, read N- to C-terminus: Photosystem II D2 protein (352 aa).

Residues 40-60 (CAYLALGGWLTGTTFVTSWYT) form a helical membrane-spanning segment. Position 117 (His117) interacts with chlorophyll a. A helical transmembrane segment spans residues 124–140 (GFMLRQFEIARLVGVRP). Pheophytin a-binding residues include Gln129 and Asn142. The chain crosses the membrane as a helical span at residues 152-165 (VFVSVFLIYPLGQS). Residue His197 coordinates chlorophyll a. The chain crosses the membrane as a helical span at residues 207–227 (GALLCAIHGATVENTLYKDGE). His214 and Phe261 together coordinate a plastoquinone. His214 is a Fe cation binding site. His268 lines the Fe cation pocket. The chain crosses the membrane as a helical span at residues 278-294 (GLWMSSIGVVGLALNLR).

The protein belongs to the reaction center PufL/M/PsbA/D family. As to quaternary structure, PSII is composed of 1 copy each of membrane proteins PsbA, PsbB, PsbC, PsbD, PsbE, PsbF, PsbH, PsbI, PsbJ, PsbK, PsbL, PsbM, PsbT, PsbX, PsbY, PsbZ, Psb30/Ycf12, peripheral proteins PsbO, CyanoQ (PsbQ), PsbU, PsbV and a large number of cofactors. It forms dimeric complexes. The D1/D2 heterodimer binds P680, chlorophylls that are the primary electron donor of PSII, and subsequent electron acceptors. It shares a non-heme iron and each subunit binds pheophytin, quinone, additional chlorophylls, carotenoids and lipids. There is also a Cl(-1) ion associated with D1 and D2, which is required for oxygen evolution. The PSII complex binds additional chlorophylls, carotenoids and specific lipids. serves as cofactor.

It is found in the cellular thylakoid membrane. The enzyme catalyses 2 a plastoquinone + 4 hnu + 2 H2O = 2 a plastoquinol + O2. Photosystem II (PSII) is a light-driven water:plastoquinone oxidoreductase that uses light energy to abstract electrons from H(2)O, generating O(2) and a proton gradient subsequently used for ATP formation. It consists of a core antenna complex that captures photons, and an electron transfer chain that converts photonic excitation into a charge separation. The D1/D2 (PsbA/PsbD) reaction center heterodimer binds P680, the primary electron donor of PSII as well as several subsequent electron acceptors. D2 is needed for assembly of a stable PSII complex. This chain is Photosystem II D2 protein, found in Synechococcus sp. (strain JA-3-3Ab) (Cyanobacteria bacterium Yellowstone A-Prime).